The following is a 249-amino-acid chain: Elongator complex protein 6 homolog (249 aa).

Belongs to the ELP6 family. Component of the elongator complex.

The protein localises to the cytoplasm. The protein resides in the nucleus. Its pathway is tRNA modification; 5-methoxycarbonylmethyl-2-thiouridine-tRNA biosynthesis. Its function is as follows. Component of the elongator complex which is required for multiple tRNA modifications, including mcm5U (5-methoxycarbonylmethyl uridine), mcm5s2U (5-methoxycarbonylmethyl-2-thiouridine), and ncm5U (5-carbamoylmethyl uridine). The elongator complex catalyzes formation of carboxymethyluridine in the wobble base at position 34 in tRNAs. In Schizosaccharomyces pombe (strain 972 / ATCC 24843) (Fission yeast), this protein is Elongator complex protein 6 homolog.